Consider the following 310-residue polypeptide: MSTTTGAFIAGGVAACGAVTVTHSFETVKIRLQLQGELQAKQDAAKKYRGVLHGVKVILQNEGPRGLFRGIGSAYIYQVLLNGCRLGFYEPLRQGLATTIYQDAQVQSLGINVLAGAASGIIGAAAGSPFFLVKTRLQSFSPFLPVGTQHNYKNSFDGLRKIHTSEGVSGLYRGVGAAMVRTGFGSSVQLPTYFFAKRRLMKHLGMEDGPGLHLASSTASGFVVCCVMHPPDTIMSRMYNQTGNLYKGVFDCLFKTIKTEGVLAIYKGYFAHLARILPHTILTLSLAEQTNKIMRRLEDRFLSDSLKENL.

3 Solcar repeats span residues 2–95 (STTT…LRQG), 107–199 (QSLG…AKRR), and 208–293 (DGPG…TNKI). A run of 6 helical transmembrane segments spans residues 8 to 28 (FIAG…FETV), 72 to 92 (GSAY…YEPL), 114 to 133 (LAGA…FFLV), 178 to 198 (AMVR…FAKR), 211 to 228 (GLHL…CCVM), and 265 to 286 (IYKG…TLSL).

It belongs to the mitochondrial carrier (TC 2.A.29) family.

It is found in the mitochondrion inner membrane. Its function is as follows. Mitochondrial transporter that does not mediate citrate export from mitochondria to cytoplasm. Its exact function has still to be determined. This is Mitochondrial citrate transporter E from Aspergillus niger (strain ATCC 1015 / CBS 113.46 / FGSC A1144 / LSHB Ac4 / NCTC 3858a / NRRL 328 / USDA 3528.7).